The primary structure comprises 511 residues: Xylose import ATP-binding protein XylG (511 aa).

2 consecutive ABC transporter domains span residues 6-244 (LEMR…VGRE) and 261-506 (FEAR…IGKP). 38–45 (GENGAGKS) is an ATP binding site.

It belongs to the ABC transporter superfamily. Xylose importer (TC 3.A.1.2.4) family. In terms of assembly, the complex is composed of two ATP-binding proteins (XylG), two transmembrane proteins (XylH) and a solute-binding protein (XylF).

The protein localises to the cell inner membrane. It carries out the reaction D-xylose(out) + ATP + H2O = D-xylose(in) + ADP + phosphate + H(+). Its function is as follows. Part of the ABC transporter complex XylFGH involved in xylose import. Responsible for energy coupling to the transport system. The sequence is that of Xylose import ATP-binding protein XylG from Brucella abortus (strain 2308).